A 195-amino-acid chain; its full sequence is dITP/XTP pyrophosphatase (195 aa).

9–14 (TGNKGK) contacts substrate. The Mg(2+) site is built by Glu41 and Asp70. Asp70 (proton acceptor) is an active-site residue. Residues Ser71, 155–158 (FGYD), Lys178, and 183–184 (HR) contribute to the substrate site.

The protein belongs to the HAM1 NTPase family. Homodimer. Mg(2+) is required as a cofactor.

It carries out the reaction XTP + H2O = XMP + diphosphate + H(+). It catalyses the reaction dITP + H2O = dIMP + diphosphate + H(+). The enzyme catalyses ITP + H2O = IMP + diphosphate + H(+). In terms of biological role, pyrophosphatase that catalyzes the hydrolysis of nucleoside triphosphates to their monophosphate derivatives, with a high preference for the non-canonical purine nucleotides XTP (xanthosine triphosphate), dITP (deoxyinosine triphosphate) and ITP. Seems to function as a house-cleaning enzyme that removes non-canonical purine nucleotides from the nucleotide pool, thus preventing their incorporation into DNA/RNA and avoiding chromosomal lesions. The sequence is that of dITP/XTP pyrophosphatase from Haemophilus influenzae (strain ATCC 51907 / DSM 11121 / KW20 / Rd).